The following is a 285-amino-acid chain: Urease accessory protein UreD 1 (285 aa).

This sequence belongs to the UreD family. UreD, UreF and UreG form a complex that acts as a GTP-hydrolysis-dependent molecular chaperone, activating the urease apoprotein by helping to assemble the nickel containing metallocenter of UreC. The UreE protein probably delivers the nickel.

It is found in the cytoplasm. Required for maturation of urease via the functional incorporation of the urease nickel metallocenter. This is Urease accessory protein UreD 1 from Pseudomonas syringae pv. syringae (strain B728a).